The chain runs to 278 residues: Envelope glycoprotein L (278 aa).

An N-terminal signal peptide occupies residues 1 to 30 (MCRRPDCGFSFSPGPVILLWCCLLLPIVSS). A gL betaherpesvirus-type domain is found at 43–256 (VPAECPELTR…DKYYAGLPPE (214 aa)). Cysteine 154 and cysteine 159 form a disulfide bridge.

It belongs to the herpesviridae glycoprotein L (gL) family. Betaherpesvirinae gL subfamily. Interacts with glycoprotein H (gH); this interaction is necessary for the correct processing and cell surface expression of gH. Forms the envelope pentamer complex (PC) composed of gH, gL, UL128, UL130, and UL131A. The pentamer interacts with host NRP2. Forms the envelope trimer complex composed of gH, gL, and gO. The trimer interacts with host PDGFRA. The trimer also interacts with host EPHA2.

Its subcellular location is the virion membrane. It is found in the host cell membrane. The protein localises to the host Golgi apparatus. It localises to the host trans-Golgi network. In terms of biological role, the heterodimer glycoprotein H-glycoprotein L is required for the fusion of viral and plasma membranes leading to virus entry into the host cell. Acts as a functional inhibitor of gH and maintains gH in an inhibited form. Upon binding to host integrins, gL dissociates from gH leading to activation of the viral fusion glycoproteins gB and gH. In human cytomegalovirus, forms two distincts complexes to mediate viral entry, a trimer and a pentamer at the surface of the virion envelope. The gH-gL-gO trimer is required for infection in fibroblasts by interacting with host PDGFRA, and in glioblastoma cells by interacting with host EPHA2. The gH-gL-UL128-UL130-UL131A pentamer is essential for viral entry in epithelial, endothelial and myeloid cells via interaction with host NRP2. This is Envelope glycoprotein L from Homo sapiens (Human).